The chain runs to 320 residues: Ribosomal RNA small subunit methyltransferase H (320 aa).

S-adenosyl-L-methionine-binding positions include 36–38 (GGH), Asp-56, Phe-82, Asp-103, and Gln-110.

It belongs to the methyltransferase superfamily. RsmH family.

The protein resides in the cytoplasm. The catalysed reaction is cytidine(1402) in 16S rRNA + S-adenosyl-L-methionine = N(4)-methylcytidine(1402) in 16S rRNA + S-adenosyl-L-homocysteine + H(+). Specifically methylates the N4 position of cytidine in position 1402 (C1402) of 16S rRNA. The protein is Ribosomal RNA small subunit methyltransferase H of Chromobacterium violaceum (strain ATCC 12472 / DSM 30191 / JCM 1249 / CCUG 213 / NBRC 12614 / NCIMB 9131 / NCTC 9757 / MK).